The primary structure comprises 154 residues: Interleukin-7 (154 aa).

The signal sequence occupies residues 1–25 (MFHVSFRYIFGIPPLILVLLPVTSS). Cystine bridges form between cysteine 27/cysteine 145, cysteine 58/cysteine 133, and cysteine 71/cysteine 116. Residues asparagine 94 and asparagine 115 are each glycosylated (N-linked (GlcNAc...) asparagine).

It belongs to the IL-7/IL-9 family. In terms of assembly, interacts with IL7R and CSF2RG. Post-translationally, three disulfide bonds are present.

The protein resides in the secreted. Its function is as follows. Hematopoietic cytokine that plays an essential role in the development, expansion, and survival of naive and memory T-cells and B-cells thereby regulating the number of mature lymphocytes and maintaining lymphoid homeostasis. Mechanistically, exerts its biological effects through a receptor composed of IL7RA subunit and the cytokine receptor common subunit gamma/CSF2RG. Binding to the receptor leads to activation of various kinases including JAK1 or JAK3 depending on the cell type and subsequently propagation of signals through activation of several downstream signaling pathways including the PI3K/Akt/mTOR or the JAK-STAT5. This Mus musculus (Mouse) protein is Interleukin-7 (Il7).